Consider the following 542-residue polypeptide: CTP synthase (542 aa).

The tract at residues 1–265 is amidoligase domain; the sequence is MARYVFITGG…DSEVLSAFGM (265 aa). Serine 13 contacts CTP. Serine 13 provides a ligand contact to UTP. An ATP-binding site is contributed by 14-19; that stretch reads SLGKGI. Tyrosine 54 serves as a coordination point for L-glutamine. Aspartate 71 is a binding site for ATP. Mg(2+) is bound by residues aspartate 71 and glutamate 139. Residues 146–148, 186–191, and lysine 222 each bind CTP; these read DIE and KTKPTQ. UTP is bound by residues 186 to 191 and lysine 222; that span reads KTKPTQ. The Glutamine amidotransferase type-1 domain maps to 291 to 541; it reads TIAVVGKYTG…IEATVEQSRL (251 aa). Alanine 353 contributes to the L-glutamine binding site. Catalysis depends on cysteine 380, which acts as the Nucleophile; for glutamine hydrolysis. L-glutamine is bound by residues 381-384, glutamate 404, and arginine 469; that span reads FGMQ. Catalysis depends on residues histidine 514 and glutamate 516.

The protein belongs to the CTP synthase family. As to quaternary structure, homotetramer.

The catalysed reaction is UTP + L-glutamine + ATP + H2O = CTP + L-glutamate + ADP + phosphate + 2 H(+). It carries out the reaction L-glutamine + H2O = L-glutamate + NH4(+). The enzyme catalyses UTP + NH4(+) + ATP = CTP + ADP + phosphate + 2 H(+). It functions in the pathway pyrimidine metabolism; CTP biosynthesis via de novo pathway; CTP from UDP: step 2/2. Its activity is regulated as follows. Allosterically activated by GTP, when glutamine is the substrate; GTP has no effect on the reaction when ammonia is the substrate. The allosteric effector GTP functions by stabilizing the protein conformation that binds the tetrahedral intermediate(s) formed during glutamine hydrolysis. Inhibited by the product CTP, via allosteric rather than competitive inhibition. In terms of biological role, catalyzes the ATP-dependent amination of UTP to CTP with either L-glutamine or ammonia as the source of nitrogen. Regulates intracellular CTP levels through interactions with the four ribonucleotide triphosphates. The polypeptide is CTP synthase (Bartonella henselae (strain ATCC 49882 / DSM 28221 / CCUG 30454 / Houston 1) (Rochalimaea henselae)).